Consider the following 149-residue polypeptide: Nascent polypeptide-associated complex subunit beta-2 (149 aa).

The 66-residue stretch at 38–103 folds into the NAC-A/B domain; it reads DKDNTKLQAE…PKENTLNGLY (66 aa).

Belongs to the NAC-beta family. Part of the nascent polypeptide-associated complex (NAC), consisting of EGD2 and either EGD1 or BTT1. NAC associates with ribosomes via EGD1 or BTT1.

The protein resides in the cytoplasm. Its subcellular location is the nucleus. Functionally, acts as a component of the nascent polypeptide-associated complex (NAC), which promotes mitochondrial protein import by enhancing productive ribosome interactions with the outer mitochondrial membrane. Also blocks the inappropriate interaction of ribosomes translating non-secretory nascent polypeptides with translocation sites in the membrane of the endoplasmic reticulum. BTT1 may act as a transcription factor that exert a negative effect on the expression of several genes that are transcribed by RNA polymerase II. This Saccharomyces cerevisiae (strain ATCC 204508 / S288c) (Baker's yeast) protein is Nascent polypeptide-associated complex subunit beta-2 (BTT1).